A 117-amino-acid polypeptide reads, in one-letter code: DNA-directed RNA polymerase II subunit RPB11 (117 aa).

The protein belongs to the archaeal Rpo11/eukaryotic RPB11/RPC19 RNA polymerase subunit family. In terms of assembly, component of the RNA polymerase II (Pol II) complex consisting of 12 subunits.

The protein resides in the nucleus. In terms of biological role, DNA-dependent RNA polymerase catalyzes the transcription of DNA into RNA using the four ribonucleoside triphosphates as substrates. Component of RNA polymerase II which synthesizes mRNA precursors and many functional non-coding RNAs. Pol II is the central component of the basal RNA polymerase II transcription machinery. It is composed of mobile elements that move relative to each other. RPB11 is part of the core element with the central large cleft. The sequence is that of DNA-directed RNA polymerase II subunit RPB11 from Drosophila melanogaster (Fruit fly).